The following is a 313-amino-acid chain: Protein KRE1 (313 aa).

The signal sequence occupies residues Met-1–Ala-26. Copy 1 of the repeat occupies Thr-72–Thr-86. The 2 X approximate repeats stretch occupies residues Thr-72–Thr-141. A disordered region spans residues Pro-94–Thr-114. Repeat 2 spans residues Thr-127–Thr-141. Over residues Thr-147 to Ala-181 the composition is skewed to low complexity. The tract at residues Thr-147–Val-198 is disordered. Asn-288 is lipidated: GPI-anchor amidated asparagine. A propeptide spans Glu-289–Leu-313 (removed in mature form).

It belongs to the KRE1 family. Extensively modified; probably through addition of O-linked mannose residues. Post-translationally, the GPI-anchor is attached to the protein in the endoplasmic reticulum and serves to target the protein to the cell surface. There, the glucosamine-inositol phospholipid moiety is cleaved off and the GPI-modified mannoprotein is covalently attached via its lipidless GPI glycan remnant to the 1,6-beta-glucan of the outer cell wall layer.

The protein localises to the cell membrane. It localises to the secreted. It is found in the cell wall. In terms of biological role, involved in a late stage of cell wall 1,6-beta-glucan synthesis and assembly. Has a structural, rather than enzymic, function within cell wall 1,6-beta-glucan assembly and architecture, possibly by being involved in covalently cross-linking 1,6-beta-glucans to other cell wall components such as 1,3-beta-glucan, chitin and certain mannoproteins. Acts as the plasma membrane receptor for the yeast K1 viral toxin. The chain is Protein KRE1 (KRE1) from Saccharomyces cerevisiae (strain ATCC 204508 / S288c) (Baker's yeast).